The sequence spans 229 residues: Heptaprenylglyceryl phosphate synthase (229 aa).

K12 contacts sn-glycerol 1-phosphate. The Mg(2+) site is built by D14 and S40. Residues 159-164 (YLEYSG), G189, and 209-210 (GN) each bind sn-glycerol 1-phosphate.

It belongs to the GGGP/HepGP synthase family. Group I subfamily. As to quaternary structure, homodimer. Mg(2+) is required as a cofactor.

The catalysed reaction is sn-glycerol 1-phosphate + all-trans-heptaprenyl diphosphate = 3-heptaprenyl-sn-glycero-1-phosphate + diphosphate. Its pathway is membrane lipid metabolism; glycerophospholipid metabolism. In terms of biological role, prenyltransferase that catalyzes in vivo the transfer of the heptaprenyl moiety of heptaprenyl pyrophosphate (HepPP; 35 carbon atoms) to the C3 hydroxyl of sn-glycerol-1-phosphate (G1P), producing heptaprenylglyceryl phosphate (HepGP). This reaction is an ether-bond-formation step in the biosynthesis of archaea-type G1P-based membrane lipids found in Bacillales. In Bacillus cereus (strain ZK / E33L), this protein is Heptaprenylglyceryl phosphate synthase.